A 225-amino-acid chain; its full sequence is uncharacterized protein (225 aa).

This is an uncharacterized protein from Schizosaccharomyces pombe (strain 972 / ATCC 24843) (Fission yeast).